The chain runs to 196 residues: Peptidyl-tRNA hydrolase (196 aa).

Residue Tyr21 participates in tRNA binding. His26 (proton acceptor) is an active-site residue. Residues Phe72, Asn74, and Asn120 each coordinate tRNA.

This sequence belongs to the PTH family. Monomer.

The protein localises to the cytoplasm. The enzyme catalyses an N-acyl-L-alpha-aminoacyl-tRNA + H2O = an N-acyl-L-amino acid + a tRNA + H(+). Functionally, hydrolyzes ribosome-free peptidyl-tRNAs (with 1 or more amino acids incorporated), which drop off the ribosome during protein synthesis, or as a result of ribosome stalling. In terms of biological role, catalyzes the release of premature peptidyl moieties from peptidyl-tRNA molecules trapped in stalled 50S ribosomal subunits, and thus maintains levels of free tRNAs and 50S ribosomes. The chain is Peptidyl-tRNA hydrolase from Mycobacteroides abscessus (strain ATCC 19977 / DSM 44196 / CCUG 20993 / CIP 104536 / JCM 13569 / NCTC 13031 / TMC 1543 / L948) (Mycobacterium abscessus).